The following is a 382-amino-acid chain: Pyrimidine monooxygenase RutA (382 aa).

FMN contacts are provided by residues Ile-68–Lys-69, Asn-134, Glu-143, Arg-159–Tyr-160, and Ser-209.

It belongs to the NtaA/SnaA/DszA monooxygenase family. RutA subfamily.

The enzyme catalyses uracil + FMNH2 + NADH + O2 = (Z)-3-ureidoacrylate + FMN + NAD(+) + H2O + H(+). It catalyses the reaction thymine + FMNH2 + NADH + O2 = (Z)-2-methylureidoacrylate + FMN + NAD(+) + H2O + H(+). In terms of biological role, catalyzes the pyrimidine ring opening between N-3 and C-4 by an unusual flavin hydroperoxide-catalyzed mechanism, adding oxygen atoms in the process to yield ureidoacrylate peracid, that immediately reacts with FMN forming ureidoacrylate and FMN-N(5)-oxide. The FMN-N(5)-oxide reacts spontaneously with NADH to produce FMN. Requires the flavin reductase RutF to regenerate FMN in vivo. This is Pyrimidine monooxygenase RutA from Escherichia coli O81 (strain ED1a).